Consider the following 456-residue polypeptide: Methionine aminopeptidase 2 (456 aa).

Residues Met-1–Pro-11 show a composition bias toward pro residues. A disordered region spans residues Met-1–Arg-127. Residues Glu-31–Glu-45 are compositionally biased toward acidic residues. Basic residues predominate over residues Lys-66–Lys-79. A substrate-binding site is contributed by His-209. Asp-229, Asp-240, and His-309 together coordinate a divalent metal cation. His-317 serves as a coordination point for substrate. Positions 343 and 437 each coordinate a divalent metal cation.

It belongs to the peptidase M24A family. Methionine aminopeptidase eukaryotic type 2 subfamily. The cofactor is Co(2+). Requires Zn(2+) as cofactor. It depends on Mn(2+) as a cofactor. Fe(2+) serves as cofactor.

It localises to the cytoplasm. It carries out the reaction Release of N-terminal amino acids, preferentially methionine, from peptides and arylamides.. Its function is as follows. Cotranslationally removes the N-terminal methionine from nascent proteins. The N-terminal methionine is often cleaved when the second residue in the primary sequence is small and uncharged (Met-Ala-, Cys, Gly, Pro, Ser, Thr, or Val). In Puccinia graminis f. sp. tritici (strain CRL 75-36-700-3 / race SCCL) (Black stem rust fungus), this protein is Methionine aminopeptidase 2.